Consider the following 293-residue polypeptide: Diaminopimelate epimerase (293 aa).

Substrate contacts are provided by Asn-13, Gln-46, and Asn-66. Cys-75 functions as the Proton donor in the catalytic mechanism. Substrate is bound by residues 76 to 77 (GN), Asn-162, Asn-195, and 213 to 214 (ER). The active-site Proton acceptor is the Cys-222. Position 223-224 (223-224 (GT)) interacts with substrate.

Belongs to the diaminopimelate epimerase family. As to quaternary structure, homodimer.

The protein localises to the cytoplasm. The catalysed reaction is (2S,6S)-2,6-diaminopimelate = meso-2,6-diaminopimelate. It participates in amino-acid biosynthesis; L-lysine biosynthesis via DAP pathway; DL-2,6-diaminopimelate from LL-2,6-diaminopimelate: step 1/1. Catalyzes the stereoinversion of LL-2,6-diaminopimelate (L,L-DAP) to meso-diaminopimelate (meso-DAP), a precursor of L-lysine and an essential component of the bacterial peptidoglycan. This Psychrobacter sp. (strain PRwf-1) protein is Diaminopimelate epimerase.